The sequence spans 158 residues: Small ribosomal subunit protein uS7 (158 aa).

The protein belongs to the universal ribosomal protein uS7 family. In terms of assembly, part of the 30S ribosomal subunit. Contacts proteins S9 and S11.

Its function is as follows. One of the primary rRNA binding proteins, it binds directly to 16S rRNA where it nucleates assembly of the head domain of the 30S subunit. Is located at the subunit interface close to the decoding center, probably blocks exit of the E-site tRNA. The protein is Small ribosomal subunit protein uS7 of Azobacteroides pseudotrichonymphae genomovar. CFP2.